The primary structure comprises 481 residues: Sestrin-1 (481 aa).

Positions 63–244 are N-terminal domain; may mediate the alkylhydroperoxide reductase activity; the sequence is FADAFTDLGR…ICDITNGNHG (182 aa). Cysteine 122 serves as the catalytic Cysteine sulfenic acid (-SOH) intermediate. Residues 295-316 are disordered; the sequence is KTESMVFSTEDEDPPPDIDVSR. The segment at 310-481 is C-terminal domain; mediates TORC1 regulation; that stretch reads PDIDVSRHFE…ALRAITRYMT (172 aa). L-leucine contacts are provided by residues 375–378, threonine 387, and glutamate 452; that span reads TYNT.

The protein belongs to the sestrin family.

Its subcellular location is the nucleus. It localises to the cytoplasm. It carries out the reaction a hydroperoxide + L-cysteinyl-[protein] = S-hydroxy-L-cysteinyl-[protein] + an alcohol. May function as an intracellular leucine sensor that negatively regulates the TORC1 signaling pathway through the GATOR complex. In absence of leucine, binds the GATOR subcomplex GATOR2 and prevents TORC1 signaling. Binding of leucine to SESN2 disrupts its interaction with GATOR2 thereby activating the TORC1 signaling pathway. This stress-inducible metabolic regulator may also play a role in protection against oxidative and genotoxic stresses. May prevent the accumulation of reactive oxygen species (ROS) through the alkylhydroperoxide reductase activity born by the N-terminal domain of the protein. The chain is Sestrin-1 from Xenopus laevis (African clawed frog).